A 355-amino-acid polypeptide reads, in one-letter code: Replication-associated protein (355 aa).

One can recognise a CRESS-DNA virus Rep endonuclease domain in the interval 11–114 (SHRNVNTFLT…PLAVFERGTF (104 aa)). An RCR-1 motif is present at residues 18-21 (FLTY). A divalent metal cation-binding residues include glutamate 52, histidine 60, and histidine 62. Positions 60–62 (HLH) match the RCR-2 motif. The active-site For DNA cleavage activity is the tyrosine 100. The RCR-3 signature appears at 100 to 103 (YILK). Residue glutamate 104 coordinates a divalent metal cation. Residues 119–128 (SSFQGNPSKG) show a composition bias toward polar residues. The tract at residues 119–138 (SSFQGNPSKGNSEKKPSKDE) is disordered. The segment covering 129–138 (NSEKKPSKDE) has biased composition (basic and acidic residues). An oligomerization region spans residues 175–187 (SANKLFPEIQEEF). Residue 229 to 236 (GPTRTGKS) participates in ATP binding. Residues 252–270 (VDWSSYNEDAIYNIVDDIP) are transactivation. Positions 292-303 (KYGKKKKVQMKS) match the Nuclear localization signal motif.

It belongs to the geminiviridae Rep protein family. As to quaternary structure, homooligomer. Rep binds to repeated DNA motifs (iterons). Forms the O-complex, which is a Rep-DNA complex involved in the initiation of RCR. Part of the C- and V-complexes which are RepA-Rep-DNA complexes involved in the c-sense and v-sense transcription. Requires Mg(2+) as cofactor. Mn(2+) is required as a cofactor.

Its subcellular location is the host nucleus. Functionally, essential for the replication of viral ssDNA. The closed circular ssDNA genome is first converted to a superhelical dsDNA. Rep binds a specific region at the genome origin of replication. It introduces an endonucleolytic nick within the conserved sequence 5'-TAATATTAC-3' in the intergenic region of the genome present in all geminiviruses, thereby initiating the rolling circle replication (RCR). Following cleavage, binds covalently to the 5'-phosphate of DNA as a tyrosyl ester. The cleavage gives rise to a free 3'-OH that serves as a primer for the cellular DNA polymerase. The polymerase synthesizes the (+) strand DNA by rolling circle mechanism. After one round of replication, a Rep-catalyzed nucleotidyl transfer reaction releases a circular single-stranded virus genome, thereby terminating the replication. Displays origin-specific DNA cleavage, nucleotidyl transferase, ATPase and helicase activities. Acts as an inhibitor of C-sense gene transcription. The sequence is that of Replication-associated protein from Maize streak virus genotype B (isolate Tas) (MSV).